The primary structure comprises 288 residues: Glucose-1-phosphate thymidylyltransferase (288 aa).

Glycine 8 lines the dTDP-alpha-D-glucose pocket. The dTTP site is built by glycine 8, glycine 11, threonine 12, arginine 13, lysine 23, glutamine 24, glutamine 80, glycine 85, and aspartate 108. DTDP-alpha-D-glucose contacts are provided by lysine 23, glutamine 24, glutamine 80, glycine 85, aspartate 108, asparagine 109, glycine 143, glutamate 158, lysine 159, valine 169, and aspartate 222. A Mg(2+)-binding site is contributed by aspartate 108. Aspartate 222 lines the Mg(2+) pocket.

This sequence belongs to the glucose-1-phosphate thymidylyltransferase family. Mg(2+) is required as a cofactor.

It carries out the reaction dTTP + alpha-D-glucose 1-phosphate + H(+) = dTDP-alpha-D-glucose + diphosphate. It participates in carbohydrate biosynthesis; dTDP-L-rhamnose biosynthesis. Its function is as follows. Catalyzes the conversion of glucose-1-phosphate and dTTP to dTDP-glucose and pyrophosphate. Involved in the biosynthesis of the dTDP-L-rhamnose which is a component of the critical linker, D-N-acetylglucosamine-L-rhamnose disaccharide, which connects the galactan region of arabinogalactan to peptidoglycan via a phosphodiester linkage. This chain is Glucose-1-phosphate thymidylyltransferase (rmlA), found in Mycolicibacterium smegmatis (strain ATCC 700084 / mc(2)155) (Mycobacterium smegmatis).